A 178-amino-acid polypeptide reads, in one-letter code: Large ribosomal subunit protein uL6 (178 aa).

It belongs to the universal ribosomal protein uL6 family. In terms of assembly, part of the 50S ribosomal subunit.

Its function is as follows. This protein binds to the 23S rRNA, and is important in its secondary structure. It is located near the subunit interface in the base of the L7/L12 stalk, and near the tRNA binding site of the peptidyltransferase center. In Francisella tularensis subsp. novicida (strain U112), this protein is Large ribosomal subunit protein uL6.